A 45-amino-acid polypeptide reads, in one-letter code: Photosystem II reaction center protein K (45 aa).

Positions 1–8 are excised as a propeptide; sequence METALLLA. Residues 24-44 traverse the membrane as a helical segment; sequence LPLIPLFFLLLAFVWQASVGF.

Belongs to the PsbK family. As to quaternary structure, PSII is composed of 1 copy each of membrane proteins PsbA, PsbB, PsbC, PsbD, PsbE, PsbF, PsbH, PsbI, PsbJ, PsbK, PsbL, PsbM, PsbT, PsbX, PsbY, PsbZ, Psb30/Ycf12, peripheral proteins PsbO, CyanoQ (PsbQ), PsbU, PsbV and a large number of cofactors. It forms dimeric complexes.

The protein localises to the cellular thylakoid membrane. Functionally, one of the components of the core complex of photosystem II (PSII). PSII is a light-driven water:plastoquinone oxidoreductase that uses light energy to abstract electrons from H(2)O, generating O(2) and a proton gradient subsequently used for ATP formation. It consists of a core antenna complex that captures photons, and an electron transfer chain that converts photonic excitation into a charge separation. In Microcystis aeruginosa (strain NIES-843 / IAM M-2473), this protein is Photosystem II reaction center protein K.